The following is a 431-amino-acid chain: Evolutionarily conserved signaling intermediate in Toll pathway, mitochondrial (431 aa).

The N-terminal 48 residues, 1-48 (MSWVQATLLARGLCRAWGGTCGAALTGTSISQVPRRLPRGLHCSAAAH), are a transit peptide targeting the mitochondrion. K372 is covalently cross-linked (Glycyl lysine isopeptide (Lys-Gly) (interchain with G-Cter in ubiquitin)). Positions 400-431 (LQTSSAGLEEPPLPEDHQEEDDNLQRQQQGQS) are disordered.

This sequence belongs to the ECSIT family. As to quaternary structure, interacts with MAP3K1, SMAD4 and TRAF6. Interacts with SMAD1 only after BMP4-treatment. Part of the mitochondrial complex I assembly/MCIA complex that comprises at least the core subunits TMEM126B, NDUFAF1, ECSIT and ACAD9 and complement subunits such as COA1 and TMEM186. Interacts with NDUFAF1. Interacts with ACAD9. Interacts with TRIM59. Interacts with TMEM70 and TMEM242. Interacts (when ubiquitinated) with NF-kappa-B subunits RELA and NFKB1. Interacts with RIGI, IFIT1 and MAVS; these interactions promote RLR-mediated type I IFN induction. Interacts with SQSTM1; this interaction inhibits TLR4 signaling via functional regulation of the TRAF6-ECSIT complex. Interacts with cereblon/CRBN; this interaction inhibits the ubiquitination of ECSIT. Post-translationally, ubiquitinated on Lys-372; leading to translocation in the nucleus together with RELA and NFKB1 and expression of NF-kappa-B-dependent genes.

It localises to the cytoplasm. Its subcellular location is the nucleus. It is found in the mitochondrion. Functionally, adapter protein that plays a role in different signaling pathways including TLRs and IL-1 pathways or innate antiviral induction signaling. Plays a role in the activation of NF-kappa-B by forming a signal complex with TRAF6 and TAK1/MAP3K7 to activate TAK1/MAP3K7 leading to activation of IKKs. Once ubiquitinated, interacts with the dissociated RELA and NFKB1 proteins and translocates to the nucleus where it induces NF-kappa-B-dependent gene expression. Plays a role in innate antiviral immune response by bridging the pattern recognition receptors RIGI and MDA5/IFIT1 to the MAVS complex at the mitochondrion. Promotes proteolytic activation of MAP3K1. Involved in the BMP signaling pathway. Required for normal embryonic development. As part of the MCIA complex, involved in the assembly of the mitochondrial complex I. The chain is Evolutionarily conserved signaling intermediate in Toll pathway, mitochondrial from Homo sapiens (Human).